A 152-amino-acid polypeptide reads, in one-letter code: MALDKSVILLPLLVLVLLVLGCLGRESRAKKFQRQHMDSGSSPSSNSTYCNQMMKRRSMTQGRCKPVNTFVHEPLVDVQNVCFQEKVTCKNGQTNCFKSKSSMHITDCRLTNGSRYPNCAYRTSPKERRIIVACEGSPYVPVHFDASVEDST.

The N-terminal stretch at 1–24 is a signal peptide; that stretch reads MALDKSVILLPLLVLVLLVLGCLG. Residues lysine 31 and arginine 34 each coordinate substrate. Catalysis depends on histidine 36, which acts as the Proton acceptor. N-linked (GlcNAc...) asparagine glycosylation is present at asparagine 46. 4 cysteine pairs are disulfide-bonded: cysteine 50-cysteine 108, cysteine 64-cysteine 119, cysteine 82-cysteine 134, and cysteine 89-cysteine 96. Residues 65–69, lysine 90, and arginine 109 contribute to the substrate site; that span reads KPVNT. An N-linked (GlcNAc...) asparagine glycan is attached at asparagine 112. Histidine 143 serves as the catalytic Proton donor.

It belongs to the pancreatic ribonuclease family. As to quaternary structure, monomer. Interacts with and forms tight 1:1 complexes with RNH1. Dimerization of two such complexes may occur. Interaction with RNH1 inhibits this protein.

Its subcellular location is the secreted. It catalyses the reaction an [RNA] containing cytidine + H2O = an [RNA]-3'-cytidine-3'-phosphate + a 5'-hydroxy-ribonucleotide-3'-[RNA].. The enzyme catalyses an [RNA] containing uridine + H2O = an [RNA]-3'-uridine-3'-phosphate + a 5'-hydroxy-ribonucleotide-3'-[RNA].. In terms of biological role, endonuclease that catalyzes the cleavage of RNA on the 3' side of pyrimidine nucleotides. Acts on single-stranded and double-stranded RNA. In Miopithecus talapoin (Angolan talapoin), this protein is Ribonuclease pancreatic (RNASE1).